Here is a 490-residue protein sequence, read N- to C-terminus: Recombinase Flp protein (490 aa).

One can recognise a Tyr recombinase Flp-type domain in the interval 152-437; it reads LGNKINDEIT…VFLSSYARFK (286 aa). The O-(3'-phospho-DNA)-tyrosine intermediate role is filled by Y358.

It belongs to the 'phage' integrase family.

Functionally, catalyzes the recombination between the large inverted repetitions of the plasmid. The sequence is that of Recombinase Flp protein (R) from Zygosaccharomyces rouxii.